Reading from the N-terminus, the 296-residue chain is MAGLRQIAFYGKGGIGKSTTSQNTLAALVDLGQKILIVGCDPKADSTRLILNAKAQDTVLHLAAKEGSVEDLEVEDVLKVGYKGIKCVESGGPEPGVGCAGRGVITSINFLEENGAYDDVDYVSYDVLGDVVCGGFAMPIRENKAQEIYIVMSGEMMALYAANNIAKGILKYAHSGGVRLGGLICNERQTDRELDLAEALAAKLNSRLIHFVPRDNIVQHAELRKMTVIQYAPESQQAAEYRALADKIHANSGQGTVPTPITMEELEDMLLDFGVMKTDEQMLAELQAKEAAAAAQ.

11–18 (GKGGIGKS) contributes to the ATP binding site. Residue C99 participates in [4Fe-4S] cluster binding. R102 carries the ADP-ribosylarginine; by dinitrogenase reductase ADP-ribosyltransferase modification. C133 lines the [4Fe-4S] cluster pocket.

This sequence belongs to the NifH/BchL/ChlL family. Homodimer. The cofactor is [4Fe-4S] cluster. The reversible ADP-ribosylation of Arg-102 inactivates the nitrogenase reductase and regulates nitrogenase activity.

It carries out the reaction N2 + 8 reduced [2Fe-2S]-[ferredoxin] + 16 ATP + 16 H2O = H2 + 8 oxidized [2Fe-2S]-[ferredoxin] + 2 NH4(+) + 16 ADP + 16 phosphate + 6 H(+). The key enzymatic reactions in nitrogen fixation are catalyzed by the nitrogenase complex, which has 2 components: the iron protein and the molybdenum-iron protein. The protein is Nitrogenase iron protein (nifH1) of Sinorhizobium fredii (strain NBRC 101917 / NGR234).